The chain runs to 345 residues: Splicing factor YJU2 (345 aa).

The Zn(2+) site is built by C43, C46, C80, and C83. Positions 205-345 are disordered; that stretch reads KRLRDSDSEE…YSDSDDSSSD (141 aa). Residues 217 to 232 show a composition bias toward basic and acidic residues; the sequence is ENAKERSKKHIADKPT. 2 stretches are compositionally biased toward low complexity: residues 308-317 and 327-337; these read SSITSSSASS and GSSLGLLGAYS.

This sequence belongs to the CWC16 family. YJU2 subfamily. Component of the spliceosome. Present in the activated B complex, the catalytically activated B* complex which catalyzes the branching, the catalytic step 1 C complex catalyzing the exon ligation, and the postcatalytic P complex containing the ligated exons (mRNA) and the excised lariat intron.

It is found in the nucleus. Functionally, part of the spliceosome which catalyzes two sequential transesterification reactions, first the excision of the non-coding intron from pre-mRNA and then the ligation of the coding exons to form the mature mRNA. Plays a role in stabilizing the structure of the spliceosome catalytic core and docking of the branch helix into the active site, producing 5'-exon and lariat intron-3'-intermediates. May protect cells from TP53-dependent apoptosis upon dsDNA break damage through association with PRP19-CD5L complex. This Danio rerio (Zebrafish) protein is Splicing factor YJU2.